Reading from the N-terminus, the 93-residue chain is Cell division protein FtsB (93 aa).

Residues 1 to 3 (MRI) are Cytoplasmic-facing. A helical transmembrane segment spans residues 4-21 (FVIALTLLFGWLQYTLWF). The Periplasmic segment spans residues 22–93 (GKNGVSDYYT…FYRIVDEEEH (72 aa)). Residues 31–75 (TVEDEIEVQQQVNSKLQARNNEMFAEIDDLRQGLDAIEERARHEL) are a coiled coil.

The protein belongs to the FtsB family. As to quaternary structure, part of a complex composed of FtsB, FtsL and FtsQ.

Its subcellular location is the cell inner membrane. Its function is as follows. Essential cell division protein. May link together the upstream cell division proteins, which are predominantly cytoplasmic, with the downstream cell division proteins, which are predominantly periplasmic. This chain is Cell division protein FtsB, found in Vibrio campbellii (strain ATCC BAA-1116).